We begin with the raw amino-acid sequence, 676 residues long: Pescadillo homolog (676 aa).

The tract at residues 277–296 (TIEGSNKQSNNSSNQEVSRD) is disordered. The span at 281 to 291 (SNKQSNNSSNQ) shows a compositional bias: low complexity. The BRCT domain occupies 351 to 467 (EAGALFAPFT…KLLRPDLYAP (117 aa)). The disordered stretch occupies residues 471–676 (LPPHLSPWVK…RRKLEKTGEK (206 aa)). Residues 494–519 (EQEEEGEAEMAGEEEEEESDEEMEEA) are compositionally biased toward acidic residues. Positions 520–531 (PETKKADAKADE) are enriched in basic and acidic residues. Acidic residues-rich tracts occupy residues 532–541 (SESEDEDESV) and 548–581 (ADSD…DEEE). Positions 571-676 (EAASESEDEE…RRKLEKTGEK (106 aa)) form a coiled coil. Positions 582 to 592 (AARTQHQKELE) are enriched in basic and acidic residues. Basic residues predominate over residues 611–624 (KKKSSQAKKIAAKK). Positions 625 to 635 (RKEEEELERQK) are enriched in basic and acidic residues.

The protein belongs to the pescadillo family. Component of the NOP7 complex, composed of erb1, nop7 and ytm1. The complex is held together by erb1, which interacts with nop7 via its N-terminal domain and with ytm1 via a high-affinity interaction between the seven-bladed beta-propeller domains of the 2 proteins. The NOP7 complex associates with the 66S pre-ribosome.

It is found in the nucleus. The protein localises to the nucleolus. It localises to the nucleoplasm. Its function is as follows. Component of the NOP7 complex, which is required for maturation of the 25S and 5.8S ribosomal RNAs and formation of the 60S ribosome. The protein is Pescadillo homolog (nop7) of Aspergillus terreus (strain NIH 2624 / FGSC A1156).